A 275-amino-acid polypeptide reads, in one-letter code: 5'-nucleotidase SurE (275 aa).

Residues Asp14, Asp15, Ser46, and Asn104 each coordinate a divalent metal cation.

Belongs to the SurE nucleotidase family. The cofactor is a divalent metal cation.

The protein localises to the cytoplasm. It catalyses the reaction a ribonucleoside 5'-phosphate + H2O = a ribonucleoside + phosphate. Functionally, nucleotidase that shows phosphatase activity on nucleoside 5'-monophosphates. In Synechocystis sp. (strain ATCC 27184 / PCC 6803 / Kazusa), this protein is 5'-nucleotidase SurE.